The primary structure comprises 143 residues: Peptide methionine sulfoxide reductase B8 (143 aa).

The MsrB domain occupies 18 to 139; that stretch reads DEEWRAVLSP…NSVSLKFASA (122 aa). Positions 57, 60, 103, and 106 each coordinate Zn(2+). A disulfide bridge links C75 with C128. The active-site Nucleophile is the C128.

The protein belongs to the MsrB Met sulfoxide reductase family. The cofactor is Zn(2+).

The protein localises to the cytoplasm. It is found in the cytosol. The enzyme catalyses L-methionyl-[protein] + [thioredoxin]-disulfide + H2O = L-methionyl-(R)-S-oxide-[protein] + [thioredoxin]-dithiol. Its function is as follows. Catalyzes the reduction of methionine sulfoxide (MetSO) to methionine in proteins. Plays a protective role against oxidative stress by restoring activity to proteins that have been inactivated by methionine oxidation. MSRB family specifically reduces the MetSO R-enantiomer. The chain is Peptide methionine sulfoxide reductase B8 (MSRB8) from Arabidopsis thaliana (Mouse-ear cress).